The following is a 940-amino-acid chain: SWI/SNF-related matrix-associated actin-dependent regulator of chromatin subfamily A-like protein 1 (940 aa).

Positions 1-155 (MSISPLKCPC…GQGHPQASLE (155 aa)) are disordered. S2 is subject to N-acetylserine. Mediates interaction with RPA2 regions lie at residues 2–36 (SISP…KLLA) and 11–36 (LLQR…KLLA). Residues 17–40 (GKIEANRQKALARRAEKLLAEQHQ) show a composition bias toward basic and acidic residues. Residues 18-40 (KIEANRQKALARRAEKLLAEQHQ) adopt a coiled-coil conformation. Polar residues-rich tracts occupy residues 41–53 (KPAQ…SQNL) and 68–95 (KQQN…TSEQ). A phosphoserine mark is found at S125, S131, S153, and S200. HARP domains are found at residues 229 to 299 (VVGS…QPLE) and 325 to 396 (SLAF…DPLP). The Helicase ATP-binding domain maps to 442 to 597 (NFAIAQRGRL…YTQILAVRPT (156 aa)). Residue 455–462 (DDMGLGKT) coordinates ATP. The short motif at 546–549 (DESH) is the DESH box element. The Nuclear localization signal motif lies at 641 to 658 (RRLKGDVLSQLPAKQARW). The tract at residues 662–682 (PQARSTPGPEPPWMPPPRMTT) is disordered. Residues 669-679 (GPEPPWMPPPR) are compositionally biased toward pro residues. The 157-residue stretch at 708 to 864 (SIIEYILDLL…ETNFSEMTEA (157 aa)) folds into the Helicase C-terminal domain. A disordered region spans residues 899 to 918 (ESFDPGSQDTGDKLDESTLT).

This sequence belongs to the SNF2/RAD54 helicase family. SMARCAL1 subfamily. Interacts with RPA2; the interaction is direct and mediates the recruitment by the RPA complex of SMARCAL1 to sites of DNA damage. Post-translationally, DNA damage-regulated phosphorylation by kinases that may include ATM, ATR and PRKDC. As to expression, expressed in mature oocytes, 2-4 cell stage embryos and 8-16 cell stage embryos. Expressed at lower levels in morulae and blastocysts.

It is found in the nucleus. The catalysed reaction is ATP + H2O = ADP + phosphate + H(+). In terms of biological role, ATP-dependent annealing helicase that binds selectively to fork DNA relative to ssDNA or dsDNA and catalyzes the rewinding of the stably unwound DNA. Rewinds single-stranded DNA bubbles that are stably bound by replication protein A (RPA). Acts throughout the genome to reanneal stably unwound DNA, performing the opposite reaction of many enzymes, such as helicases and polymerases, that unwind DNA. May play an important role in DNA damage response by acting at stalled replication forks. This chain is SWI/SNF-related matrix-associated actin-dependent regulator of chromatin subfamily A-like protein 1 (SMARCAL1), found in Bos taurus (Bovine).